Here is a 111-residue protein sequence, read N- to C-terminus: Nucleoid-associated protein TTE0040 (111 aa).

Belongs to the YbaB/EbfC family. As to quaternary structure, homodimer.

The protein localises to the cytoplasm. Its subcellular location is the nucleoid. In terms of biological role, binds to DNA and alters its conformation. May be involved in regulation of gene expression, nucleoid organization and DNA protection. The polypeptide is Nucleoid-associated protein TTE0040 (Caldanaerobacter subterraneus subsp. tengcongensis (strain DSM 15242 / JCM 11007 / NBRC 100824 / MB4) (Thermoanaerobacter tengcongensis)).